The primary structure comprises 236 residues: UPF0280 protein Mlab_0453 (236 aa).

This sequence belongs to the UPF0280 family.

In Methanocorpusculum labreanum (strain ATCC 43576 / DSM 4855 / Z), this protein is UPF0280 protein Mlab_0453.